Reading from the N-terminus, the 185-residue chain is Large ribosomal subunit protein uL22 (185 aa).

The tract at residues 157–185 (VAAPSPEEDAPKKKQSKKKMARQKLMQRD) is disordered. The segment covering 169-178 (KKQSKKKMAR) has biased composition (basic residues).

This sequence belongs to the universal ribosomal protein uL22 family.

This Ixodes scapularis (Black-legged tick) protein is Large ribosomal subunit protein uL22 (RpL17).